We begin with the raw amino-acid sequence, 257 residues long: GTP cyclohydrolase III (257 aa).

It belongs to the archaeal-type GTP cyclohydrolase family.

It catalyses the reaction GTP + 3 H2O = 2-amino-5-formylamino-6-(5-phospho-D-ribosylamino)pyrimidin-4(3H)-one + 2 phosphate + 2 H(+). Functionally, catalyzes the formation of 2-amino-5-formylamino-6-ribofuranosylamino-4(3H)-pyrimidinone ribonucleotide monophosphate and inorganic phosphate from GTP. Also has an independent pyrophosphate phosphohydrolase activity. This Halorubrum lacusprofundi (strain ATCC 49239 / DSM 5036 / JCM 8891 / ACAM 34) protein is GTP cyclohydrolase III.